A 97-amino-acid polypeptide reads, in one-letter code: Citrate lyase acyl carrier protein (97 aa).

O-(phosphoribosyl dephospho-coenzyme A)serine is present on Ser14.

This sequence belongs to the CitD family. In terms of assembly, oligomer with a subunit composition of (alpha,beta,gamma)6.

It localises to the cytoplasm. Functionally, covalent carrier of the coenzyme of citrate lyase. This is Citrate lyase acyl carrier protein from Cronobacter sakazakii (strain ATCC BAA-894) (Enterobacter sakazakii).